The chain runs to 288 residues: Small ribosomal subunit protein uS2 (288 aa).

The span at E259–A276 shows a compositional bias: low complexity. Residues E259–A288 form a disordered region.

The protein belongs to the universal ribosomal protein uS2 family.

The protein is Small ribosomal subunit protein uS2 of Maricaulis maris (strain MCS10) (Caulobacter maris).